Consider the following 207-residue polypeptide: Ribosomal RNA small subunit methyltransferase G (207 aa).

S-adenosyl-L-methionine-binding positions include Gly-73, Leu-78, 124–125 (VE), and Arg-139.

This sequence belongs to the methyltransferase superfamily. RNA methyltransferase RsmG family.

It is found in the cytoplasm. The catalysed reaction is guanosine(527) in 16S rRNA + S-adenosyl-L-methionine = N(7)-methylguanosine(527) in 16S rRNA + S-adenosyl-L-homocysteine. Functionally, specifically methylates the N7 position of guanine in position 527 of 16S rRNA. This Escherichia coli O1:K1 / APEC protein is Ribosomal RNA small subunit methyltransferase G.